Here is a 440-residue protein sequence, read N- to C-terminus: Serine hydroxymethyltransferase (440 aa).

123–125 (GHI) is a (6S)-5,6,7,8-tetrahydrofolate binding site. At Lys238 the chain carries N6-(pyridoxal phosphate)lysine.

It belongs to the SHMT family. In terms of assembly, homodimer. Pyridoxal 5'-phosphate is required as a cofactor.

It localises to the cytoplasm. It participates in amino-acid biosynthesis; glycine biosynthesis; glycine from L-serine: step 1/1. Functionally, catalyzes the reversible interconversion of serine and glycine with a modified folate serving as the one-carbon carrier. Also exhibits a pteridine-independent aldolase activity toward beta-hydroxyamino acids, producing glycine and aldehydes, via a retro-aldol mechanism. The protein is Serine hydroxymethyltransferase of Nitrosopumilus maritimus (strain SCM1).